The sequence spans 117 residues: Large ribosomal subunit protein bL20 (117 aa).

This sequence belongs to the bacterial ribosomal protein bL20 family.

Functionally, binds directly to 23S ribosomal RNA and is necessary for the in vitro assembly process of the 50S ribosomal subunit. It is not involved in the protein synthesizing functions of that subunit. This chain is Large ribosomal subunit protein bL20, found in Limosilactobacillus reuteri (strain DSM 20016) (Lactobacillus reuteri).